Reading from the N-terminus, the 593-residue chain is Chromodomain Y-like protein (593 aa).

Polar residues predominate over residues 1–14; it reads MGIGNSQPNSQEAQ. The segment at 1–30 is disordered; the sequence is MGIGNSQPNSQEAQLCTLPEKAEQPTDDNT. The region spanning 56–116 is the Chromo domain; the sequence is TQVESIVDKR…RHNERQKEGS (61 aa). An interaction with EZH2 region spans residues 56–304; that stretch reads TQVESIVDKR…TIQTSVTGVT (249 aa). The residue at position 83 (serine 83) is a Phosphoserine. The tract at residues 110 to 158 is disordered; it reads ERQKEGSLARASRASPSNARKQISRSTHSTLSKTNSKALVVGKDHESKS. Over residues 117 to 129 the composition is skewed to low complexity; that stretch reads LARASRASPSNAR. At lysine 130 the chain carries N6,N6,N6-trimethyllysine; by EHMT2; alternate. Lysine 130 is subject to N6,N6-dimethyllysine; by EHMT2; alternate. Lysine 130 carries the post-translational modification N6-methyllysine; by EHMT2; alternate. The segment covering 133-146 has biased composition (polar residues); sequence SRSTHSTLSKTNSK. Phosphoserine is present on residues serine 165, serine 196, and serine 211. The tract at residues 200-223 is disordered; the sequence is GRTSVDGFQGESPEKLDPVDQGAE. Residues 357-589 form an acetyl-CoA-binding domain region; it reads SENNSLNPEV…DSMLKYLQRK (233 aa).

In terms of assembly, forms multimers and multimerization is required for stable binding to chromatin. Interacts with HDAC1 and HDAC2 via its C-terminal acetyl-CoA-binding domain. Interacts with EZH2, EED, SUZ12, REST, EHMT1 and EHMT2. Part of a complex containing at least CDYL, REST, WIZ, SETB1, EHMT1 and EHMT2. Part of a complex containing at least CDYL, MIER1, MIER2, HDAC1 and HDAC2. Interacts with CHAF1A and CHAF1B; bridging the CAF-1 complex to the MCM2-7 (MCM) complex. Interacts with MCM3 and MCM5; bridging the CAF-1 complex to the MCM2-7 (MCM) complex. Interacts with EHMT2 and PRDM9; interaction only takes place when PRDM9 is bound to hotspot DNA. In terms of tissue distribution, highly expressed in testis (at protein level). Expressed in the hippocampus (at protein level). Expressed in the medial prefrontal cortex, prelimbic cortex, intralimbic cortex and cingulate cortex area (at protein level). Isoform 1: Expressed as 2 transcripts encoding the same protein, a ubiquitous transcript and a highly expressed testis-specific transcript.

It localises to the nucleus. Its subcellular location is the chromosome. It catalyses the reaction L-lysyl-[protein] + acetyl-CoA = N(6)-acetyl-L-lysyl-[protein] + CoA + H(+). It carries out the reaction 3-hydroxybutanoyl-CoA = (2E)-butenoyl-CoA + H2O. Chromatin reader protein that recognizes and binds histone H3 trimethylated at 'Lys-9', dimethylated at 'Lys-27' and trimethylated at 'Lys-27' (H3K9me3, H3K27me2 and H3K27me3, respectively). Part of multimeric repressive chromatin complexes, where it is required for transmission and restoration of repressive histone marks, thereby preserving the epigenetic landscape. Required for chromatin targeting and maximal enzymatic activity of Polycomb repressive complex 2 (PRC2); acts as a positive regulator of PRC2 activity by bridging the pre-existing histone H3K27me3 and newly recruited PRC2 on neighboring nucleosomes. Acts as a corepressor for REST by facilitating histone-lysine N-methyltransferase EHMT2 recruitment and H3K9 dimethylation at REST target genes for repression. Involved in X chromosome inactivation in females: recruited to Xist RNA-coated X chromosome and facilitates propagation of H3K9me2 by anchoring EHMT2. Promotes EZH2 accumulation and H3K27me3 methylation at DNA double strand breaks (DSBs), thereby facilitating transcriptional repression at sites of DNA damage and homology-directed repair of DSBs. Required for neuronal migration during brain development by repressing expression of RHOA. By repressing the expression of SCN8A, contributes to the inhibition of intrinsic neuronal excitability and epileptogenesis. In addition to acting as a chromatin reader, acts as a hydro-lyase. Shows crotonyl-coA hydratase activity by mediating the conversion of crotonyl-CoA ((2E)-butenoyl-CoA) to beta-hydroxybutyryl-CoA (3-hydroxybutanoyl-CoA), thereby acting as a negative regulator of histone crotonylation. Histone crotonylation is required during spermatogenesis; down-regulation of histone crotonylation by CDYL regulates the reactivation of sex chromosome-linked genes in round spermatids and histone replacement in elongating spermatids. By regulating histone crotonylation and trimethylation of H3K27, may be involved in stress-induced depression-like behaviors, possibly by regulating VGF expression. May have histone acetyltransferase activity; such activity is however unsure in vivo. Functionally, not able to recognize and bind histone H3K9me3, histone H3K27me2 and histone H3K27me3, due to the presence of a N-terminal extension that inactivates the chromo domain. The chain is Chromodomain Y-like protein from Mus musculus (Mouse).